A 293-amino-acid chain; its full sequence is Lipoyl synthase (293 aa).

Residues Cys47, Cys52, Cys58, Cys73, Cys77, Cys80, and Ser285 each coordinate [4Fe-4S] cluster. Residues 59-274 (WSEGTATFMI…EKIGLELGFR (216 aa)) enclose the Radical SAM core domain.

The protein belongs to the radical SAM superfamily. Lipoyl synthase family. [4Fe-4S] cluster serves as cofactor.

The protein resides in the cytoplasm. The enzyme catalyses [[Fe-S] cluster scaffold protein carrying a second [4Fe-4S](2+) cluster] + N(6)-octanoyl-L-lysyl-[protein] + 2 oxidized [2Fe-2S]-[ferredoxin] + 2 S-adenosyl-L-methionine + 4 H(+) = [[Fe-S] cluster scaffold protein] + N(6)-[(R)-dihydrolipoyl]-L-lysyl-[protein] + 4 Fe(3+) + 2 hydrogen sulfide + 2 5'-deoxyadenosine + 2 L-methionine + 2 reduced [2Fe-2S]-[ferredoxin]. The protein operates within protein modification; protein lipoylation via endogenous pathway; protein N(6)-(lipoyl)lysine from octanoyl-[acyl-carrier-protein]: step 2/2. In terms of biological role, catalyzes the radical-mediated insertion of two sulfur atoms into the C-6 and C-8 positions of the octanoyl moiety bound to the lipoyl domains of lipoate-dependent enzymes, thereby converting the octanoylated domains into lipoylated derivatives. The sequence is that of Lipoyl synthase from Christiangramia forsetii (strain DSM 17595 / CGMCC 1.15422 / KT0803) (Gramella forsetii).